The primary structure comprises 235 residues: Regulator of G-protein signaling 18 (235 aa).

Phosphoserine is present on Ser-49. One can recognise an RGS domain in the interval 86 to 202 (SFDKLLSHRD…LKSETYLHLI (117 aa)). Residues Ser-216 and Ser-218 each carry the phosphoserine modification.

Expressed in bone marrow, spleen, fetal liver and lung. At very low levels expressed in heart.

Its subcellular location is the cytoplasm. Functionally, inhibits signal transduction by increasing the GTPase activity of G protein alpha subunits thereby driving them into their inactive GDP-bound form. Binds to G(i) alpha-1, G(i) alpha-2, G(i) alpha-3 and G(q) alpha. The polypeptide is Regulator of G-protein signaling 18 (Rgs18) (Mus musculus (Mouse)).